The following is a 198-amino-acid chain: Small ribosomal subunit protein uS7 (198 aa).

Belongs to the universal ribosomal protein uS7 family. In terms of assembly, part of the 30S ribosomal subunit.

Its function is as follows. One of the primary rRNA binding proteins, it binds directly to 16S rRNA where it nucleates assembly of the head domain of the 30S subunit. Is located at the subunit interface close to the decoding center. This chain is Small ribosomal subunit protein uS7, found in Desulfurococcus mucosus (Desulfurococcus mobilis).